Reading from the N-terminus, the 123-residue chain is MRKPQRGYARQDRVKEQIMRELAELVRTGLKDPRAGFITVNEVEVTRDYSHATVFYTILNQDAREITEEVLEHARGHLRSELAKRIKLFKTPELHFKYDESLERGLNLSALIDQVAAEKPVED.

The protein belongs to the RbfA family. Monomer. Binds 30S ribosomal subunits, but not 50S ribosomal subunits or 70S ribosomes.

The protein resides in the cytoplasm. Functionally, one of several proteins that assist in the late maturation steps of the functional core of the 30S ribosomal subunit. Associates with free 30S ribosomal subunits (but not with 30S subunits that are part of 70S ribosomes or polysomes). Required for efficient processing of 16S rRNA. May interact with the 5'-terminal helix region of 16S rRNA. This Neisseria meningitidis serogroup B (strain ATCC BAA-335 / MC58) protein is Ribosome-binding factor A.